A 481-amino-acid chain; its full sequence is Cysteine--tRNA ligase (481 aa).

Residue Cys29 coordinates Zn(2+). Residues 31–41 (PTVYDYSHLGH) carry the 'HIGH' region motif. The Zn(2+) site is built by Cys210, His235, and Glu239. Positions 272–276 (KMSKS) match the 'KMSKS' region motif. Lys275 serves as a coordination point for ATP.

This sequence belongs to the class-I aminoacyl-tRNA synthetase family. In terms of assembly, monomer. The cofactor is Zn(2+).

Its subcellular location is the cytoplasm. It catalyses the reaction tRNA(Cys) + L-cysteine + ATP = L-cysteinyl-tRNA(Cys) + AMP + diphosphate. This is Cysteine--tRNA ligase from Anaeromyxobacter dehalogenans (strain 2CP-1 / ATCC BAA-258).